A 389-amino-acid chain; its full sequence is Growth/differentiation factor 2 (389 aa).

The N-terminal stretch at M1–E20 is a signal peptide. The propeptide occupies K21–K280. N-linked (GlcNAc...) asparagine glycans are attached at residues N65, N118, N127, and N232. Over residues Q263 to V272 the composition is skewed to polar residues. Positions Q263–K284 are disordered. Basic residues predominate over residues N274–K284. 3 cysteine pairs are disulfide-bonded: C288–C354, C317–C386, and C321–C388. An N-linked (GlcNAc...) asparagine glycan is attached at N342.

This sequence belongs to the TGF-beta family. In terms of assembly, homodimer; disulfide-linked. A reversible disulfide bond can be formed between the two subunits in the homodimer; this has no effect on gdf2 activity.

It localises to the secreted. In terms of biological role, potent circulating inhibitor of angiogenesis. Signals through the type I activin receptor ACVRL1 but not other Alks. Signaling through SMAD1 in endothelial cells requires TGF-beta coreceptor endoglin/eng. This is Growth/differentiation factor 2 (gdf2) from Danio rerio (Zebrafish).